We begin with the raw amino-acid sequence, 105 residues long: Small ribosomal subunit protein uS10c (105 aa).

This sequence belongs to the universal ribosomal protein uS10 family. In terms of assembly, part of the 30S ribosomal subunit.

Its subcellular location is the plastid. The protein resides in the chloroplast. Functionally, involved in the binding of tRNA to the ribosomes. The polypeptide is Small ribosomal subunit protein uS10c (Pyropia yezoensis (Susabi-nori)).